Consider the following 218-residue polypeptide: Protease PrsW (218 aa).

A helical membrane pass occupies residues 1 to 23 (MFAIISAGIAPGIALLSYFYLKD). The Cytoplasmic portion of the chain corresponds to 24–30 (QYDNEPV). Residues 31–53 (HMVLRSFFLGVVLVFPIMFIQYV) traverse the membrane as a helical segment. Residues 54–98 (LEKENVGGGSFFVSFLSSGFLEESLKWFILMISVYPHAHFDEHYD) are Extracellular-facing. A helical transmembrane segment spans residues 99-121 (GIVYGASVSLGFATLENILYLIG). Topologically, residues 122–129 (HGVEHAFV) are cytoplasmic. A helical transmembrane segment spans residues 130-151 (RALLPVSCHALIGVIMGFYLGK). The Extracellular portion of the chain corresponds to 152 to 180 (ARFSADKARVKWLTLSLVVPSLLHGSYDF). The helical transmembrane segment at 181 to 203 (ILTALSNWIYYMLPFMVFLWWFG) threads the bilayer. Residues 204–218 (LRKAKKARSVNMMQV) lie on the Cytoplasmic side of the membrane.

It belongs to the protease PrsW family.

The protein localises to the cell membrane. Involved in the degradation of anti-sigma-W factor RsiW. Responsible for Site-1 cleavage of the RsiW anti-sigma factor. This results, after two other proteolytic steps catalyzed by the RasP and ClpXP proteases, in the release of SigW and the transcription activation of the genes under the control of the sigma-W factor. Seems to be responsible for sensing antimicrobial peptides that damage the cell membrane and other agents that cause cell envelope stress. Therefore it is a protease governing regulated intramembrane proteolysis and resistance to antimicrobial peptides in B.subtilis. This Bacillus subtilis (strain 168) protein is Protease PrsW.